A 157-amino-acid chain; its full sequence is Ribosomal RNA large subunit methyltransferase H (157 aa).

S-adenosyl-L-methionine is bound by residues L73, G104, and 123–128 (LGPLTL).

This sequence belongs to the RNA methyltransferase RlmH family. Homodimer.

It is found in the cytoplasm. The catalysed reaction is pseudouridine(1915) in 23S rRNA + S-adenosyl-L-methionine = N(3)-methylpseudouridine(1915) in 23S rRNA + S-adenosyl-L-homocysteine + H(+). Its function is as follows. Specifically methylates the pseudouridine at position 1915 (m3Psi1915) in 23S rRNA. In Xylella fastidiosa (strain M23), this protein is Ribosomal RNA large subunit methyltransferase H.